The following is a 279-amino-acid chain: Diaminopimelate epimerase 1 (279 aa).

Substrate-binding residues include asparagine 13 and asparagine 66. Cysteine 75 serves as the catalytic Proton donor. Substrate is bound by residues 76–77 (GN), asparagine 164, asparagine 197, and 215–216 (ER). Cysteine 224 serves as the catalytic Proton acceptor. 225–226 (GT) serves as a coordination point for substrate.

The protein belongs to the diaminopimelate epimerase family. In terms of assembly, homodimer.

It is found in the cytoplasm. It catalyses the reaction (2S,6S)-2,6-diaminopimelate = meso-2,6-diaminopimelate. It functions in the pathway amino-acid biosynthesis; L-lysine biosynthesis via DAP pathway; DL-2,6-diaminopimelate from LL-2,6-diaminopimelate: step 1/1. In terms of biological role, catalyzes the stereoinversion of LL-2,6-diaminopimelate (L,L-DAP) to meso-diaminopimelate (meso-DAP), a precursor of L-lysine and an essential component of the bacterial peptidoglycan. The polypeptide is Diaminopimelate epimerase 1 (Nostoc sp. (strain PCC 7120 / SAG 25.82 / UTEX 2576)).